The primary structure comprises 159 residues: Large ribosomal subunit protein uL15 (159 aa).

Residues 1–13 are compositionally biased toward basic and acidic residues; the sequence is MRLNELRDNDGAT. Residues 1–41 are disordered; that stretch reads MRLNELRDNDGATKIRTRVGRGIGSGKGKTGGRGVKGQKSR. A compositionally biased stretch (gly residues) spans 21–35; the sequence is RGIGSGKGKTGGRGV.

This sequence belongs to the universal ribosomal protein uL15 family. In terms of assembly, part of the 50S ribosomal subunit.

Binds to the 23S rRNA. The chain is Large ribosomal subunit protein uL15 from Maricaulis maris (strain MCS10) (Caulobacter maris).